The following is a 77-amino-acid chain: U8-lycotoxin-Ls1m (77 aa).

Residues 1–20 (MKLMIFTGLVLFAIVSLIEA) form the signal peptide. Residues 21–26 (QAENEK) constitute a propeptide that is removed on maturation.

It belongs to the neurotoxin 19 (CSTX) family. 08 (U8-Lctx) subfamily. Contains 4 disulfide bonds. Expressed by the venom gland.

The protein localises to the secreted. The sequence is that of U8-lycotoxin-Ls1m from Lycosa singoriensis (Wolf spider).